The sequence spans 224 residues: Cytidylate kinase (224 aa).

Residue 14–22 (GPAGSGKST) coordinates ATP.

Belongs to the cytidylate kinase family. Type 1 subfamily.

The protein localises to the cytoplasm. The catalysed reaction is CMP + ATP = CDP + ADP. It carries out the reaction dCMP + ATP = dCDP + ADP. This chain is Cytidylate kinase, found in Mycoplasmoides gallisepticum (strain R(low / passage 15 / clone 2)) (Mycoplasma gallisepticum).